A 97-amino-acid chain; its full sequence is MKIRPLHDRVIVKRKEVESKSAGGIVLTGTAAGKSTRGEVLAVGNGRILDNGEIKPLDVKVGDIVIFNDGYGVKSEKIDHEEVLIMSESDILAIVEA.

It belongs to the GroES chaperonin family. Heptamer of 7 subunits arranged in a ring. Interacts with the chaperonin GroEL.

The protein resides in the cytoplasm. Functionally, together with the chaperonin GroEL, plays an essential role in assisting protein folding. The GroEL-GroES system forms a nano-cage that allows encapsulation of the non-native substrate proteins and provides a physical environment optimized to promote and accelerate protein folding. GroES binds to the apical surface of the GroEL ring, thereby capping the opening of the GroEL channel. The sequence is that of Co-chaperonin GroES from Yersinia enterocolitica serotype O:8 / biotype 1B (strain NCTC 13174 / 8081).